The primary structure comprises 344 residues: KRR1 small subunit processome component homolog (344 aa).

Residues 126 to 194 enclose the KH domain; that stretch reads DIIKIGNLVH…VRDIVLDTMN (69 aa). The span at 230–246 shows a compositional bias: basic residues; sequence KNKNISKRKQPKNKKPK. The segment at 230-326 is disordered; the sequence is KNKNISKRKQ…KRAAEDNKVD (97 aa). Residues 271–344 are a coiled coil; the sequence is FLNKEQKQAK…MKANKKKERS (74 aa). A compositionally biased stretch (basic and acidic residues) spans 272–303; the sequence is LNKEQKQAKRQQERTAKQAEAAKKQDERRNKD.

This sequence belongs to the KRR1 family. Monomer. Component of the ribosomal small subunit (SSU) processome.

It is found in the nucleus. The protein localises to the nucleolus. Required for 40S ribosome biogenesis. Involved in nucleolar processing of pre-18S ribosomal RNA and ribosome assembly. Binds to RNA. Required for female germline development, cell viability during eye development and for survival of dividing cells and epithelial cells during early wing disk development. The chain is KRR1 small subunit processome component homolog from Drosophila mojavensis (Fruit fly).